A 116-amino-acid polypeptide reads, in one-letter code: Large ribosomal subunit protein bL19 (116 aa).

The protein belongs to the bacterial ribosomal protein bL19 family.

Functionally, this protein is located at the 30S-50S ribosomal subunit interface and may play a role in the structure and function of the aminoacyl-tRNA binding site. The chain is Large ribosomal subunit protein bL19 from Pseudomonas aeruginosa (strain LESB58).